The primary structure comprises 88 residues: Small ribosomal subunit protein uS17 (88 aa).

Belongs to the universal ribosomal protein uS17 family. As to quaternary structure, part of the 30S ribosomal subunit.

One of the primary rRNA binding proteins, it binds specifically to the 5'-end of 16S ribosomal RNA. This is Small ribosomal subunit protein uS17 from Synechococcus sp. (strain WH7803).